A 148-amino-acid chain; its full sequence is Large-conductance mechanosensitive channel (148 aa).

2 helical membrane-spanning segments follow: residues 12 to 32 (AFAMKGNVIDMAVGVVIGGAF) and 85 to 105 (GQFLQATFDFLIIAFAIFLFI).

This sequence belongs to the MscL family. Homopentamer.

Its subcellular location is the cell inner membrane. Its function is as follows. Channel that opens in response to stretch forces in the membrane lipid bilayer. May participate in the regulation of osmotic pressure changes within the cell. This chain is Large-conductance mechanosensitive channel, found in Bacteroides thetaiotaomicron (strain ATCC 29148 / DSM 2079 / JCM 5827 / CCUG 10774 / NCTC 10582 / VPI-5482 / E50).